A 427-amino-acid polypeptide reads, in one-letter code: Trigger factor (427 aa).

A PPIase FKBP-type domain is found at 163 to 248 (GNIAIIDFKG…VKGIKVKELP (86 aa)).

This sequence belongs to the FKBP-type PPIase family. Tig subfamily.

Its subcellular location is the cytoplasm. It catalyses the reaction [protein]-peptidylproline (omega=180) = [protein]-peptidylproline (omega=0). Its function is as follows. Involved in protein export. Acts as a chaperone by maintaining the newly synthesized protein in an open conformation. Functions as a peptidyl-prolyl cis-trans isomerase. This is Trigger factor from Clostridium botulinum (strain Alaska E43 / Type E3).